The following is a 517-amino-acid chain: MFS-type transporter avaJ (517 aa).

The segment covering Met1–Gln12 has biased composition (basic and acidic residues). The interval Met1–Phe28 is disordered. The helical transmembrane segment at Ala40 to Pro60 threads the bilayer. Residue Asn63 is glycosylated (N-linked (GlcNAc...) asparagine). 5 consecutive transmembrane segments (helical) span residues Ile103–Phe123, Pro131–Leu151, Trp161–Ala181, Ala204–Phe224, and Ala230–Pro250. An N-linked (GlcNAc...) asparagine glycan is attached at Asn265. The next 5 membrane-spanning stretches (helical) occupy residues Met299–Leu319, Phe338–Met358, Leu391–Ile411, Val442–Met462, and Ala476–Gly496. 2 N-linked (GlcNAc...) asparagine glycosylation sites follow: Asn497 and Asn512.

The protein belongs to the major facilitator superfamily. TCR/Tet family.

Its subcellular location is the membrane. It functions in the pathway secondary metabolite biosynthesis. In terms of biological role, MFS-type transporter; part of the cluster that mediates the biosynthesis of a highly modified cyclo-arginine-tryptophan dipeptide (cRW). The protein is MFS-type transporter avaJ of Aspergillus versicolor.